The primary structure comprises 203 residues: Large ribosomal subunit protein uL13 (203 aa).

Ala-2 carries the N-acetylalanine modification. Citrulline is present on Arg-59. Phosphoserine; by ZIPK/DAPK3 is present on Ser-77. Position 140 is a citrulline (Arg-140). Residue Lys-191 is modified to N6-acetyllysine.

It belongs to the universal ribosomal protein uL13 family. As to quaternary structure, component of the 60S ribosome. Component of the GAIT complex. Interacts with EIF4G1. In terms of processing, phosphorylation at Ser-77 upon interferon-gamma treatment in macrophages involves a DAPK1-DAPK3 kinase cascade and is causing release from the ribosome, association with the GAIT complex and subsequent involvement in transcript-selective translation inhibition. Citrullinated by PADI4.

It is found in the cytoplasm. Its function is as follows. Associated with ribosomes but is not required for canonical ribosome function and has extra-ribosomal functions. Component of the GAIT (gamma interferon-activated inhibitor of translation) complex which mediates interferon-gamma-induced transcript-selective translation inhibition in inflammation processes. Upon interferon-gamma activation and subsequent phosphorylation dissociates from the ribosome and assembles into the GAIT complex which binds to stem loop-containing GAIT elements in the 3'-UTR of diverse inflammatory mRNAs (such as ceruplasmin) and suppresses their translation. In the GAIT complex interacts with m7G cap-bound eIF4G at or near the eIF3-binding site and blocks the recruitment of the 43S ribosomal complex. Involved in methylation of rRNA. This chain is Large ribosomal subunit protein uL13 (Rpl13a), found in Mus musculus (Mouse).